The primary structure comprises 557 residues: Predicted GPI-anchored protein 17 (557 aa).

A signal peptide spans 1–19 (MKFSTVFTAIFALGTAVSA). N-linked (GlcNAc...) asparagine glycosylation is found at Asn-62, Asn-116, Asn-284, and Asn-309. The stretch at 320 to 355 (LRKREYNDAVEAALRDIQKREEGIDDVEIALRKMKR) forms a coiled coil. Asn-376, Asn-471, and Asn-520 each carry an N-linked (GlcNAc...) asparagine glycan. A lipid anchor (GPI-anchor amidated asparagine) is attached at Asn-533. The propeptide at 534-557 (AGSSYGPGFYSTIFAVFGLFAMMI) is removed in mature form.

Post-translationally, substrate for cleavage by KEX2 in vitro.

The protein localises to the cell membrane. In terms of biological role, predicted GPI-anchored protein which may have a role during host infection. The chain is Predicted GPI-anchored protein 17 (PGA17) from Candida albicans (strain SC5314 / ATCC MYA-2876) (Yeast).